Here is a 249-residue protein sequence, read N- to C-terminus: 5'-nucleotidase SurE (249 aa).

The a divalent metal cation site is built by Asp-8, Asp-9, Ser-39, and Asn-91.

Belongs to the SurE nucleotidase family. A divalent metal cation serves as cofactor.

Its subcellular location is the cytoplasm. It catalyses the reaction a ribonucleoside 5'-phosphate + H2O = a ribonucleoside + phosphate. Nucleotidase that shows phosphatase activity on nucleoside 5'-monophosphates. This is 5'-nucleotidase SurE from Pseudomonas entomophila (strain L48).